Consider the following 245-residue polypeptide: Demethylmenaquinone methyltransferase (245 aa).

S-adenosyl-L-methionine-binding positions include threonine 62, aspartate 80, 105 to 106 (DA), and serine 122.

Belongs to the class I-like SAM-binding methyltransferase superfamily. MenG/UbiE family.

The catalysed reaction is a 2-demethylmenaquinol + S-adenosyl-L-methionine = a menaquinol + S-adenosyl-L-homocysteine + H(+). The protein operates within quinol/quinone metabolism; menaquinone biosynthesis; menaquinol from 1,4-dihydroxy-2-naphthoate: step 2/2. Functionally, methyltransferase required for the conversion of demethylmenaquinol (DMKH2) to menaquinol (MKH2). The polypeptide is Demethylmenaquinone methyltransferase (Clavibacter sepedonicus (Clavibacter michiganensis subsp. sepedonicus)).